Reading from the N-terminus, the 152-residue chain is Xanthine-guanine phosphoribosyltransferase (152 aa).

5-phospho-alpha-D-ribose 1-diphosphate-binding positions include 37 to 38 (RG), Arg69, and 88 to 96 (DDLVDTGVT). A GMP-binding site is contributed by Arg69. Mg(2+) is bound at residue Asp89. Guanine contacts are provided by Asp92 and Ile135. 2 residues coordinate xanthine: Asp92 and Ile135. GMP-binding positions include 92–96 (DTGVT) and 134–135 (WI).

The protein belongs to the purine/pyrimidine phosphoribosyltransferase family. XGPT subfamily. In terms of assembly, homotetramer. It depends on Mg(2+) as a cofactor.

It localises to the cell inner membrane. It carries out the reaction GMP + diphosphate = guanine + 5-phospho-alpha-D-ribose 1-diphosphate. The catalysed reaction is XMP + diphosphate = xanthine + 5-phospho-alpha-D-ribose 1-diphosphate. It catalyses the reaction IMP + diphosphate = hypoxanthine + 5-phospho-alpha-D-ribose 1-diphosphate. The protein operates within purine metabolism; GMP biosynthesis via salvage pathway; GMP from guanine: step 1/1. Its pathway is purine metabolism; XMP biosynthesis via salvage pathway; XMP from xanthine: step 1/1. Functionally, purine salvage pathway enzyme that catalyzes the transfer of the ribosyl-5-phosphate group from 5-phospho-alpha-D-ribose 1-diphosphate (PRPP) to the N9 position of the 6-oxopurines guanine and xanthine to form the corresponding ribonucleotides GMP (guanosine 5'-monophosphate) and XMP (xanthosine 5'-monophosphate), with the release of PPi. To a lesser extent, also acts on hypoxanthine. In Sodalis glossinidius (strain morsitans), this protein is Xanthine-guanine phosphoribosyltransferase.